A 252-amino-acid chain; its full sequence is Pyridoxine 5'-phosphate synthase (252 aa).

3-amino-2-oxopropyl phosphate is bound at residue Asn7. 9-10 (DH) serves as a coordination point for 1-deoxy-D-xylulose 5-phosphate. Arg18 is a 3-amino-2-oxopropyl phosphate binding site. The active-site Proton acceptor is the His43. The 1-deoxy-D-xylulose 5-phosphate site is built by Arg45 and His50. Glu70 acts as the Proton acceptor in catalysis. Thr100 contributes to the 1-deoxy-D-xylulose 5-phosphate binding site. His190 functions as the Proton donor in the catalytic mechanism. Residues Gly191 and 212–213 (GH) each bind 3-amino-2-oxopropyl phosphate.

This sequence belongs to the PNP synthase family. Homooctamer; tetramer of dimers.

The protein localises to the cytoplasm. It carries out the reaction 3-amino-2-oxopropyl phosphate + 1-deoxy-D-xylulose 5-phosphate = pyridoxine 5'-phosphate + phosphate + 2 H2O + H(+). Its pathway is cofactor biosynthesis; pyridoxine 5'-phosphate biosynthesis; pyridoxine 5'-phosphate from D-erythrose 4-phosphate: step 5/5. Its function is as follows. Catalyzes the complicated ring closure reaction between the two acyclic compounds 1-deoxy-D-xylulose-5-phosphate (DXP) and 3-amino-2-oxopropyl phosphate (1-amino-acetone-3-phosphate or AAP) to form pyridoxine 5'-phosphate (PNP) and inorganic phosphate. The chain is Pyridoxine 5'-phosphate synthase from Synechococcus sp. (strain RCC307).